We begin with the raw amino-acid sequence, 366 residues long: Erythronate-4-phosphate dehydrogenase (366 aa).

Residues Ser-46 and Thr-67 each contribute to the substrate site. Residues Asp-147 and Thr-175 each coordinate NAD(+). Residue Arg-208 is part of the active site. Asp-228 lines the NAD(+) pocket. Residue Glu-233 is part of the active site. The Proton donor role is filled by His-250. An NAD(+)-binding site is contributed by Gly-253. Tyr-254 provides a ligand contact to substrate.

This sequence belongs to the D-isomer specific 2-hydroxyacid dehydrogenase family. PdxB subfamily. In terms of assembly, homodimer.

The protein resides in the cytoplasm. The catalysed reaction is 4-phospho-D-erythronate + NAD(+) = (R)-3-hydroxy-2-oxo-4-phosphooxybutanoate + NADH + H(+). It functions in the pathway cofactor biosynthesis; pyridoxine 5'-phosphate biosynthesis; pyridoxine 5'-phosphate from D-erythrose 4-phosphate: step 2/5. In terms of biological role, catalyzes the oxidation of erythronate-4-phosphate to 3-hydroxy-2-oxo-4-phosphonooxybutanoate. The polypeptide is Erythronate-4-phosphate dehydrogenase (Coxiella burnetii (strain Dugway 5J108-111)).